The primary structure comprises 973 residues: NLR family member X1 (973 aa).

A mitochondrion-targeting transit peptide spans 1-84 (MRWGCHLPRT…EAIQRHRRNL (84 aa)). The segment at 73–554 (ATEAIQRHRR…RILPLLFNLL (482 aa)) is required for interaction with MAVS. The 324-residue stretch at 158-481 (QTVVLYGTVG…LRFFLAPCVE (324 aa)) folds into the NACHT domain. 164-171 (GTVGTGKS) contributes to the ATP binding site. The interval 554-972 (LKVVPRVFGR…TLLEQLGGSG (419 aa)) is required for the repression of MAVS-induced interferon signaling. The LRRNT domain occupies 665–692 (RQVLPPSELLDHLFFHYEFQNQRFSAEV). LRR repeat units follow at residues 693–716 (LGSLRQLNLAGVRMTPLKCTVVAS), 722–745 (RHPLDEVNLASCQLDPAGLHTLMP), 747–775 (LLRARKLGLQLNNLGPEACRDLRDLLLHD), 776–799 (QCQITTLRLSNNPLTAAGVGVLMD), 809–832 (HLSLLHTDLGDEGLELLAAQLDRN), 833–855 (KQLQELNVAYNGAGDTVALALAK), 856–875 (AARKHPSLELLHLYFNELSS), and 876–897 (EGRQVLRDLGGSGEGGARVVAS). In terms of domain architecture, LRRCT spans 904-968 (VSEYWSVILS…SEVKTLLEQL (65 aa)).

This sequence belongs to the NLRP family. Homohexamer. Interacts with MAVS. Interacts with TUFM.

The protein resides in the mitochondrion outer membrane. Its function is as follows. Participates in antiviral signaling. Acts as a negative regulator of MAVS-mediated antiviral responses, through the inhibition of the virus-induced RLH (RIG-like helicase)-MAVS interaction. Instead, promotes autophagy by interacting with TUFM and subsequently recruiting the autophagy-related proteins ATG5 and ATG12. Also regulates MAVS-dependent NLRP3 inflammasome activation to attenuate apoptosis. Has no inhibitory function on NF-kappa-B signaling pathway, but enhances NF-kappa-B and JUN N-terminal kinase dependent signaling through the production of reactive oxygen species. Regulates viral mediated-inflammation and energy metabolism in a sex-dependent manner. In females, prevents uncontrolled inflammation and energy metabolism and thus, may contribute to the sex differences observed in infectious and inflammatory diseases. This Rattus norvegicus (Rat) protein is NLR family member X1 (Nlrx1).